The sequence spans 96 residues: UPF0251 protein Spea_3639 (96 aa).

Belongs to the UPF0251 family.

In Shewanella pealeana (strain ATCC 700345 / ANG-SQ1), this protein is UPF0251 protein Spea_3639.